The sequence spans 621 residues: Solute carrier family 2, facilitated glucose transporter member 12 (621 aa).

Residues 1–48 (MVPVENTEGPNLLNQKGTAVETEGSYRASGSRHPPWARGCGMFTFLSS) lie on the Cytoplasmic side of the membrane. Residues 49–69 (VTAAVSGLLVGYELGIISGAL) form a helical membrane-spanning segment. The Extracellular segment spans residues 70-84 (LQIKTLLTLSCHEQE). A helical membrane pass occupies residues 85–105 (MVVSSLLIGALLASLTGGVLI). At 106-119 (DRYGRRTAIILSSC) the chain is on the cytoplasmic side. A helical membrane pass occupies residues 120 to 140 (LLGLGSLVLILSLSYTVLIVG). Position 141 (Arg-141) is a topological domain, extracellular. The chain crosses the membrane as a helical span at residues 142 to 162 (IAIGVSISLSSIATCVYIAEI). At 163–176 (APQHRRGLLVSLNE) the chain is on the cytoplasmic side. Residues 177-197 (LMIVIGILSAYISNYAFANVF) traverse the membrane as a helical segment. The Extracellular portion of the chain corresponds to 198-201 (HGWK). A helical membrane pass occupies residues 202–222 (YMFGLVIPLGILQAIAMYFLP). Over 223–282 (PSPRFLVMKGQEGAASKVLGRLRALSDATEELTVIKSSLKDEYQYSFWDLFRSKDNMRTR) the chain is Cytoplasmic. A helical transmembrane segment spans residues 283–303 (IMIGLTLVFFVQITGQPNILF). Topologically, residues 304 to 321 (YASTVLKSVGFQSNEAAS) are extracellular. A helical membrane pass occupies residues 322-342 (LASTGVGVVKVISTIPATLLV). Topologically, residues 343-349 (DHVGSKT) are cytoplasmic. The chain crosses the membrane as a helical span at residues 350–370 (FLCIGSSVMAASLVTMGIVNL). Residues 371 to 470 (NIHMNFTNIC…PAFLKWLSLA (100 aa)) lie on the Extracellular side of the membrane. Residues Asn-375, Asn-387, Asn-400, and Asn-405 are each glycosylated (N-linked (GlcNAc...) asparagine). Residues 471–491 (SLLVYVAAFSIGLGPMPWLVL) traverse the membrane as a helical segment. Residues 492-502 (SEIFPGGIRGR) are Cytoplasmic-facing. Residues 503–523 (AMALTSSMNWGINLLISLTFL) traverse the membrane as a helical segment. The Extracellular portion of the chain corresponds to 524–532 (TVTDLIGLP). A helical transmembrane segment spans residues 533 to 553 (WVCFIYTIMSLASLLFVVMFI). The Cytoplasmic segment spans residues 554–621 (PETKGCSLEQ…GQSRQLSPEN (68 aa)).

It belongs to the major facilitator superfamily. Sugar transporter (TC 2.A.1.1) family. Glucose transporter subfamily.

The protein resides in the cell membrane. Its subcellular location is the endomembrane system. It is found in the cytoplasm. The protein localises to the perinuclear region. It carries out the reaction D-glucose(out) = D-glucose(in). In terms of biological role, insulin-independent facilitative glucose transporter. The sequence is that of Solute carrier family 2, facilitated glucose transporter member 12 from Macaca fascicularis (Crab-eating macaque).